Consider the following 482-residue polypeptide: Glutamate--tRNA ligase 2 (482 aa).

Positions 8–18 (PSPTGQLHIGG) match the 'HIGH' region motif. The 'KMSKS' region signature appears at 249-253 (KLSKR). ATP is bound at residue Lys252.

It belongs to the class-I aminoacyl-tRNA synthetase family. Glutamate--tRNA ligase type 1 subfamily. Monomer.

The protein resides in the cytoplasm. It carries out the reaction tRNA(Glu) + L-glutamate + ATP = L-glutamyl-tRNA(Glu) + AMP + diphosphate. Its function is as follows. Catalyzes the attachment of glutamate to tRNA(Glu) in a two-step reaction: glutamate is first activated by ATP to form Glu-AMP and then transferred to the acceptor end of tRNA(Glu). The protein is Glutamate--tRNA ligase 2 of Caldicellulosiruptor saccharolyticus (strain ATCC 43494 / DSM 8903 / Tp8T 6331).